A 96-amino-acid chain; its full sequence is Protein RnfH (96 aa).

It belongs to the UPF0125 (RnfH) family.

The chain is Protein RnfH from Pectobacterium carotovorum subsp. carotovorum (strain PC1).